Here is a 477-residue protein sequence, read N- to C-terminus: Charged multivesicular body protein 7 (477 aa).

2 coiled-coil regions span residues 252–280 (KLQT…TIKE) and 382–428 (ESLS…QQQQ). Basic and acidic residues-rich tracts occupy residues 411–424 (EEKQ…KEKQ) and 465–477 (KQDE…SELI). The segment at 411-477 (EEKQKQKQIE…ENKQKTSELI (67 aa)) is disordered.

The protein belongs to the SNF7 family.

It localises to the cytoplasm. Its function is as follows. Plays a role in the endosomal sorting pathway. The sequence is that of Charged multivesicular body protein 7 (chmp7) from Dictyostelium discoideum (Social amoeba).